The sequence spans 769 residues: Polyribonucleotide nucleotidyltransferase (769 aa).

Mg(2+) contacts are provided by Asp490 and Asp496. In terms of domain architecture, KH spans 557–616; sequence PKIDTIMIPVDKIKVVIGKGGEQIDKIIAETGVKIDIDDEGLCSIFSSDQSAIDRAKEII. Positions 626–694 constitute an S1 motif domain; it reads GEVYEAKVVR…DKGRVDASMR (69 aa). Basic and acidic residues predominate over residues 700–734; sequence PEGYVEPERKPRERRDNKDRRNGNGFDRRNNDRNN. Residues 700 to 769 form a disordered region; the sequence is PEGYVEPERK…FPELSTKKPE (70 aa). Over residues 736 to 746 the composition is skewed to low complexity; sequence NNHNNNSGNHS. The segment covering 747-769 has biased composition (basic and acidic residues); that stretch reads FELRERKSHVDHEFPELSTKKPE.

This sequence belongs to the polyribonucleotide nucleotidyltransferase family. The cofactor is Mg(2+).

The protein resides in the cytoplasm. It carries out the reaction RNA(n+1) + phosphate = RNA(n) + a ribonucleoside 5'-diphosphate. Its function is as follows. Involved in mRNA degradation. Catalyzes the phosphorolysis of single-stranded polyribonucleotides processively in the 3'- to 5'-direction. This chain is Polyribonucleotide nucleotidyltransferase, found in Lactococcus lactis subsp. cremoris (strain SK11).